The chain runs to 67 residues: Large ribosomal subunit protein uL29 (67 aa).

Belongs to the universal ribosomal protein uL29 family. As to quaternary structure, part of the 50S ribosomal subunit. Contacts protein L23 and trigger factor when it is complexed with the ribosome.

Its function is as follows. Binds the 23S rRNA. One of the proteins that surrounds the polypeptide exit tunnel on the outside of the subunit. The protein is Large ribosomal subunit protein uL29 (rpmC) of Deinococcus radiodurans (strain ATCC 13939 / DSM 20539 / JCM 16871 / CCUG 27074 / LMG 4051 / NBRC 15346 / NCIMB 9279 / VKM B-1422 / R1).